Here is an 88-residue protein sequence, read N- to C-terminus: Large ribosomal subunit protein bL27 (88 aa).

The interval 1–23 (MAHKKGTGSTRNGRDSNAQRLGV) is disordered. A compositionally biased stretch (polar residues) spans 7-19 (TGSTRNGRDSNAQ).

Belongs to the bacterial ribosomal protein bL27 family.

The protein is Large ribosomal subunit protein bL27 (rpmA) of Synechococcus elongatus (strain ATCC 33912 / PCC 7942 / FACHB-805) (Anacystis nidulans R2).